The primary structure comprises 324 residues: Putative arsenical pump-driving ATPase (324 aa).

21–28 (GKGGVGKT) contacts ATP.

Belongs to the arsA ATPase family.

The catalysed reaction is arsenite(in) + ATP + H2O = arsenite(out) + ADP + phosphate + H(+). Anion-transporting ATPase. Catalyzes the extrusion of arsenite. The protein is Putative arsenical pump-driving ATPase of Methanothermobacter thermautotrophicus (strain ATCC 29096 / DSM 1053 / JCM 10044 / NBRC 100330 / Delta H) (Methanobacterium thermoautotrophicum).